A 326-amino-acid chain; its full sequence is Phosphate acyltransferase (326 aa).

It belongs to the PlsX family. Homodimer. Probably interacts with PlsY.

The protein localises to the cytoplasm. It carries out the reaction a fatty acyl-[ACP] + phosphate = an acyl phosphate + holo-[ACP]. It participates in lipid metabolism; phospholipid metabolism. In terms of biological role, catalyzes the reversible formation of acyl-phosphate (acyl-PO(4)) from acyl-[acyl-carrier-protein] (acyl-ACP). This enzyme utilizes acyl-ACP as fatty acyl donor, but not acyl-CoA. In Macrococcus caseolyticus (strain JCSC5402) (Macrococcoides caseolyticum), this protein is Phosphate acyltransferase.